Here is a 174-residue protein sequence, read N- to C-terminus: Adipose-secreted signaling protein (174 aa).

N-acetylalanine is present on Ala-2. Thr-147 carries the post-translational modification Phosphothreonine.

This sequence belongs to the ADISSP family. Expression is adipose-specific and highly brown adipose tissue-enriched.

The protein localises to the secreted. Its function is as follows. Adipocyte-secreted protein (adipokine) that acts as a key regulator for white adipose tissue (WAT) thermogenesis and glucose homeostasis at least in part through activation of protein kinase A (PKA). The protein is Adipose-secreted signaling protein of Mus musculus (Mouse).